The chain runs to 2293 residues: Protein Ycf2 B (2293 aa).

Residue 1647 to 1654 (GSIGTGRS) coordinates ATP.

This sequence belongs to the Ycf2 family.

It localises to the plastid. Its subcellular location is the chloroplast stroma. Its function is as follows. Probable ATPase of unknown function. Its presence in a non-photosynthetic plant (Epifagus virginiana) and experiments in tobacco indicate that it has an essential function which is probably not related to photosynthesis. This is Protein Ycf2 B from Crucihimalaya wallichii (Rock-cress).